A 365-amino-acid chain; its full sequence is Membrane-bound lytic murein transglycosylase C (365 aa).

An N-terminal signal peptide occupies residues 1-19 (MKKYTKYLPLLLIIPFLAA). Cysteine 20 carries the N-palmitoyl cysteine lipid modification. The S-diacylglycerol cysteine moiety is linked to residue cysteine 20.

Belongs to the transglycosylase Slt family.

Its subcellular location is the cell outer membrane. The catalysed reaction is Exolytic cleavage of the (1-&gt;4)-beta-glycosidic linkage between N-acetylmuramic acid (MurNAc) and N-acetylglucosamine (GlcNAc) residues in peptidoglycan, from either the reducing or the non-reducing ends of the peptidoglycan chains, with concomitant formation of a 1,6-anhydrobond in the MurNAc residue.. Murein-degrading enzyme. May play a role in recycling of muropeptides during cell elongation and/or cell division. This chain is Membrane-bound lytic murein transglycosylase C, found in Actinobacillus pleuropneumoniae serotype 5b (strain L20).